A 92-amino-acid polypeptide reads, in one-letter code: Large ribosomal subunit protein bL31 (92 aa).

Positions 66 to 92 (GMGSANPDVDAPAPKKAAKKSDAESDS) are disordered. The segment covering 70-80 (ANPDVDAPAPK) has biased composition (low complexity).

Belongs to the bacterial ribosomal protein bL31 family. Type A subfamily. As to quaternary structure, part of the 50S ribosomal subunit.

Its function is as follows. Binds the 23S rRNA. The sequence is that of Large ribosomal subunit protein bL31 from Synechococcus sp. (strain RCC307).